The following is a 159-amino-acid chain: Cyclic pyranopterin monophosphate synthase (159 aa).

Residues 75 to 77 and 113 to 114 contribute to the substrate site; these read LCH and ME. The active site involves Asp-128.

It belongs to the MoaC family. As to quaternary structure, homohexamer; trimer of dimers.

It catalyses the reaction (8S)-3',8-cyclo-7,8-dihydroguanosine 5'-triphosphate = cyclic pyranopterin phosphate + diphosphate. It functions in the pathway cofactor biosynthesis; molybdopterin biosynthesis. Its function is as follows. Catalyzes the conversion of (8S)-3',8-cyclo-7,8-dihydroguanosine 5'-triphosphate to cyclic pyranopterin monophosphate (cPMP). The polypeptide is Cyclic pyranopterin monophosphate synthase (Aliivibrio fischeri (strain MJ11) (Vibrio fischeri)).